Here is a 251-residue protein sequence, read N- to C-terminus: 5'-nucleotidase SurE (251 aa).

The a divalent metal cation site is built by aspartate 8, aspartate 9, serine 40, and asparagine 95.

It belongs to the SurE nucleotidase family. Requires a divalent metal cation as cofactor.

The protein resides in the cytoplasm. The enzyme catalyses a ribonucleoside 5'-phosphate + H2O = a ribonucleoside + phosphate. Nucleotidase that shows phosphatase activity on nucleoside 5'-monophosphates. The protein is 5'-nucleotidase SurE of Maridesulfovibrio salexigens (strain ATCC 14822 / DSM 2638 / NCIMB 8403 / VKM B-1763) (Desulfovibrio salexigens).